Here is a 179-residue protein sequence, read N- to C-terminus: NADH-quinone oxidoreductase subunit B (179 aa).

Residues Cys52, Cys53, Cys117, and Cys147 each contribute to the [4Fe-4S] cluster site.

The protein belongs to the complex I 20 kDa subunit family. NDH-1 is composed of 14 different subunits. Subunits NuoB, C, D, E, F, and G constitute the peripheral sector of the complex. Requires [4Fe-4S] cluster as cofactor.

It is found in the cell inner membrane. The enzyme catalyses a quinone + NADH + 5 H(+)(in) = a quinol + NAD(+) + 4 H(+)(out). Functionally, NDH-1 shuttles electrons from NADH, via FMN and iron-sulfur (Fe-S) centers, to quinones in the respiratory chain. The immediate electron acceptor for the enzyme in this species is believed to be ubiquinone. Couples the redox reaction to proton translocation (for every two electrons transferred, four hydrogen ions are translocated across the cytoplasmic membrane), and thus conserves the redox energy in a proton gradient. The sequence is that of NADH-quinone oxidoreductase subunit B from Ehrlichia chaffeensis (strain ATCC CRL-10679 / Arkansas).